Here is a 79-residue protein sequence, read N- to C-terminus: CATR tumorigenic conversion 1 protein (79 aa).

The protein is CATR tumorigenic conversion 1 protein (CATR1) of Homo sapiens (Human).